Reading from the N-terminus, the 344-residue chain is Melanocyte-stimulating hormone receptor (344 aa).

Residues 1–37 (MPMQGAQRKLLGSLNSTPTATSNLGLAANHTGAPCLE) are Extracellular-facing. Asparagine 29 carries an N-linked (GlcNAc...) asparagine glycan. The chain crosses the membrane as a helical span at residues 38–63 (VPIPDGLFLSLGLVSLVENVLVVAAI). Residues 64-72 (AKNRNLHSS) lie on the Cytoplasmic side of the membrane. A helical membrane pass occupies residues 73–93 (MYCFICCLAVSDLLVSGSNML). Residues 94–118 (ETAIILLLEAGALVTRASVVQQLHN) are Extracellular-facing. Residues 119–140 (TIDVLTCSSMLCSLCFLGAIAV) form a helical membrane-spanning segment. Residues 141–163 (DRYISIFYALRYHSIMTLPRAQR) are Cytoplasmic-facing. A helical transmembrane segment spans residues 164-183 (AIAAIWVASVLSSTLFITYY). At 184 to 191 (DHAAVLLC) the chain is on the extracellular side. Residues 192 to 211 (LVVFFLAMLVLMAVLYVHML) form a helical membrane-spanning segment. Topologically, residues 212–240 (ARACQHAQGIIRLHKRQPPAHKGFGLRGA) are cytoplasmic. Residues 241-266 (ATLTILLGIFFLCWGPFFLHLTLVVF) form a helical membrane-spanning segment. The Extracellular segment spans residues 267–279 (CPQHMTCSCIFKN). A helical transmembrane segment spans residues 280 to 300 (FKVFLTLIICNTIIDPLIYAF). The Cytoplasmic segment spans residues 301-344 (RSQELRRTLKEVLLCSRWPGCWAEGGGDSVWPGSCVTLRGPLPP). Cysteine 315 carries the S-palmitoyl cysteine lipid modification.

The protein belongs to the G-protein coupled receptor 1 family. In terms of assembly, interacts with MGRN1, but does not undergo MGRN1-mediated ubiquitination; this interaction competes with GNAS-binding and thus inhibits agonist-induced cAMP production. Interacts with OPN3; the interaction results in a decrease in MC1R-mediated cAMP signaling and ultimately a decrease in melanin production in melanocytes.

It localises to the cell membrane. In terms of biological role, receptor for MSH (alpha, beta and gamma) and ACTH. The activity of this receptor is mediated by G proteins which activate adenylate cyclase. Mediates melanogenesis, the production of eumelanin (black/brown) and phaeomelanin (red/yellow), via regulation of cAMP signaling in melanocytes. The polypeptide is Melanocyte-stimulating hormone receptor (MC1R) (Callimico goeldii (Goeldi's marmoset)).